Consider the following 81-residue polypeptide: A-kinase anchor protein 7 isoform alpha (81 aa).

G2 carries the N-myristoyl glycine lipid modification. The interval 2–11 (GQLCCFPFAR) is required for membrane localization. S-palmitoyl cysteine attachment occurs at residues C5 and C6. The segment at 29-42 (LVRLSKRLVENAVL) is RII-binding. The interval 49-81 (LEETQNKKQPGEGNSTKAEEGDRNGDGSDNNRK) is disordered. Positions 65 to 81 (KAEEGDRNGDGSDNNRK) are enriched in basic and acidic residues.

Binds cAMP-dependent protein kinase (PKA). Interacts with PRKCA; only the cytoplasmic form is capable of interacting with PRKCA.

The protein resides in the lateral cell membrane. Functionally, targets the cAMP-dependent protein kinase (PKA) to the plasma membrane, and permits functional coupling to the L-type calcium channel. The membrane-associated form reduces epithelial sodium channel (ENaC) activity, whereas the free cytoplasmic form may negatively regulate ENaC channel feedback inhibition by intracellular sodium. This Mus musculus (Mouse) protein is A-kinase anchor protein 7 isoform alpha (Akap7).